The following is a 449-amino-acid chain: Chromosomal replication initiator protein DnaA (449 aa).

Residues methionine 1–valine 72 are domain I, interacts with DnaA modulators. The tract at residues valine 72–asparagine 111 is domain II. Positions methionine 112–serine 328 are domain III, AAA+ region. ATP-binding residues include glycine 156, glycine 158, lysine 159, and threonine 160. Residues serine 329–serine 449 are domain IV, binds dsDNA.

This sequence belongs to the DnaA family. As to quaternary structure, oligomerizes as a right-handed, spiral filament on DNA at oriC.

Its subcellular location is the cytoplasm. Functionally, plays an essential role in the initiation and regulation of chromosomal replication. ATP-DnaA binds to the origin of replication (oriC) to initiate formation of the DNA replication initiation complex once per cell cycle. Binds the DnaA box (a 9 base pair repeat at the origin) and separates the double-stranded (ds)DNA. Forms a right-handed helical filament on oriC DNA; dsDNA binds to the exterior of the filament while single-stranded (ss)DNA is stabiized in the filament's interior. The ATP-DnaA-oriC complex binds and stabilizes one strand of the AT-rich DNA unwinding element (DUE), permitting loading of DNA polymerase. After initiation quickly degrades to an ADP-DnaA complex that is not apt for DNA replication. Binds acidic phospholipids. This chain is Chromosomal replication initiator protein DnaA, found in Halalkalibacterium halodurans (strain ATCC BAA-125 / DSM 18197 / FERM 7344 / JCM 9153 / C-125) (Bacillus halodurans).